The following is a 142-amino-acid chain: Transcription antitermination protein NusB (142 aa).

It belongs to the NusB family.

Functionally, involved in transcription antitermination. Required for transcription of ribosomal RNA (rRNA) genes. Binds specifically to the boxA antiterminator sequence of the ribosomal RNA (rrn) operons. This chain is Transcription antitermination protein NusB, found in Trichlorobacter lovleyi (strain ATCC BAA-1151 / DSM 17278 / SZ) (Geobacter lovleyi).